We begin with the raw amino-acid sequence, 347 residues long: Quinolinate synthase (347 aa).

2 residues coordinate iminosuccinate: His47 and Ser68. Residue Cys113 participates in [4Fe-4S] cluster binding. Iminosuccinate is bound by residues 139 to 141 and Ser156; that span reads YAN. Cys200 provides a ligand contact to [4Fe-4S] cluster. Iminosuccinate-binding positions include 226–228 and Thr243; that span reads HPE. A [4Fe-4S] cluster-binding site is contributed by Cys297.

This sequence belongs to the quinolinate synthase family. Type 1 subfamily. Requires [4Fe-4S] cluster as cofactor.

It localises to the cytoplasm. It carries out the reaction iminosuccinate + dihydroxyacetone phosphate = quinolinate + phosphate + 2 H2O + H(+). The protein operates within cofactor biosynthesis; NAD(+) biosynthesis; quinolinate from iminoaspartate: step 1/1. In terms of biological role, catalyzes the condensation of iminoaspartate with dihydroxyacetone phosphate to form quinolinate. This Salmonella choleraesuis (strain SC-B67) protein is Quinolinate synthase.